The chain runs to 134 residues: Large ribosomal subunit protein eL14z (134 aa).

The protein belongs to the eukaryotic ribosomal protein eL14 family.

The chain is Large ribosomal subunit protein eL14z (RPL14A) from Arabidopsis thaliana (Mouse-ear cress).